Here is a 636-residue protein sequence, read N- to C-terminus: Chaperone protein DnaK (636 aa).

At Thr-203 the chain carries Phosphothreonine; by autocatalysis. Positions 602–636 (VYGKQQEGAPAQEEPSAEGKKADDEGTVEGEFREV) are disordered. Over residues 618-636 (AEGKKADDEGTVEGEFREV) the composition is skewed to basic and acidic residues.

This sequence belongs to the heat shock protein 70 family.

In terms of biological role, acts as a chaperone. The sequence is that of Chaperone protein DnaK from Dehalococcoides mccartyi (strain CBDB1).